The chain runs to 206 residues: Macrophage immunometabolism regulator (206 aa).

This sequence belongs to the UNC119-binding protein family. In terms of assembly, interacts with unc119 family proteins; interaction preferentially takes place when unc119 proteins are unliganded with myristoylated proteins.

The protein localises to the cytoplasm. It is found in the cell projection. It localises to the cilium. Its function is as follows. May play a role in immune regulation through regulation of the macrophage function. Involved in the recruitment of macrophages in response to injury. May also play a role in trafficking of proteins via its interaction with unc119 family cargo adapters. May play a role in ciliary membrane localization. Functionally, regulates the macrophage function, by enhancing the resolution of inflammation and wound repair functions mediated by M2 macrophages. The regulation of macrophage function is, due at least in part, to the role of C5orf30 in regulating ability to inhibit glycolysis. Probably plays alaso a role in trafficking of proteins via its interaction with UNC119 and UNC119B cargo adapters: may help the release of UNC119 and UNC119B cargo or the recycling of UNC119 and UNC119B. May play a role in ciliary membrane localization via its interaction with UNC119B and protein transport into photoreceptor cells. The chain is Macrophage immunometabolism regulator (macir) from Danio rerio (Zebrafish).